The following is a 258-amino-acid chain: Ribose-5-phosphate isomerase (258 aa).

Belongs to the ribose 5-phosphate isomerase family.

The protein localises to the cytoplasm. It carries out the reaction aldehydo-D-ribose 5-phosphate = D-ribulose 5-phosphate. It participates in carbohydrate degradation; pentose phosphate pathway; D-ribose 5-phosphate from D-ribulose 5-phosphate (non-oxidative stage): step 1/1. In Saccharomyces cerevisiae (strain YJM789) (Baker's yeast), this protein is Ribose-5-phosphate isomerase (RKI1).